Reading from the N-terminus, the 459-residue chain is Phosphoglucosamine mutase (459 aa).

Ser102 (phosphoserine intermediate) is an active-site residue. The Mg(2+) site is built by Ser102, Asp243, Asp245, and Asp247. The residue at position 102 (Ser102) is a Phosphoserine.

It belongs to the phosphohexose mutase family. Mg(2+) serves as cofactor. In terms of processing, activated by phosphorylation.

It carries out the reaction alpha-D-glucosamine 1-phosphate = D-glucosamine 6-phosphate. Catalyzes the conversion of glucosamine-6-phosphate to glucosamine-1-phosphate. This chain is Phosphoglucosamine mutase, found in Bartonella henselae (strain ATCC 49882 / DSM 28221 / CCUG 30454 / Houston 1) (Rochalimaea henselae).